The sequence spans 311 residues: Aspartate carbamoyltransferase catalytic subunit (311 aa).

Positions 59 and 60 each coordinate carbamoyl phosphate. Position 87 (Lys-87) interacts with L-aspartate. Positions 109, 139, and 142 each coordinate carbamoyl phosphate. Residues Arg-172 and Arg-224 each coordinate L-aspartate. Carbamoyl phosphate-binding residues include Ala-265 and Pro-266.

It belongs to the aspartate/ornithine carbamoyltransferase superfamily. ATCase family. Heterododecamer (2C3:3R2) of six catalytic PyrB chains organized as two trimers (C3), and six regulatory PyrI chains organized as three dimers (R2).

The enzyme catalyses carbamoyl phosphate + L-aspartate = N-carbamoyl-L-aspartate + phosphate + H(+). Its pathway is pyrimidine metabolism; UMP biosynthesis via de novo pathway; (S)-dihydroorotate from bicarbonate: step 2/3. Catalyzes the condensation of carbamoyl phosphate and aspartate to form carbamoyl aspartate and inorganic phosphate, the committed step in the de novo pyrimidine nucleotide biosynthesis pathway. In Streptococcus pyogenes serotype M4 (strain MGAS10750), this protein is Aspartate carbamoyltransferase catalytic subunit.